The sequence spans 24 residues: Sperm protamine P3 (24 aa).

The interval 1–24 (RRRRRRRRHRRRRGRRGRRSRGRR) is disordered.

Testis.

It is found in the nucleus. Its subcellular location is the chromosome. Functionally, protamines substitute for histones in the chromatin of sperm during the haploid phase of spermatogenesis. They compact sperm DNA into a highly condensed, stable and inactive complex. In Octopus vulgaris (Common octopus), this protein is Sperm protamine P3.